The sequence spans 276 residues: Elongation factor Ts, mitochondrial (276 aa).

Belongs to the EF-Ts family.

It localises to the mitochondrion. Associates with the EF-Tu.GDP complex and induces the exchange of GDP to GTP. It remains bound to the aminoacyl-tRNA.EF-Tu.GTP complex up to the GTP hydrolysis stage on the ribosome. The protein is Elongation factor Ts, mitochondrial of Leishmania infantum.